We begin with the raw amino-acid sequence, 323 residues long: tRNA uridine(34) hydroxylase (323 aa).

The region spanning 123–217 is the Rhodanese domain; that stretch reads SDPDVVVIDT…YLETIPEEES (95 aa). Catalysis depends on Cys177, which acts as the Cysteine persulfide intermediate.

The protein belongs to the TrhO family.

The catalysed reaction is uridine(34) in tRNA + AH2 + O2 = 5-hydroxyuridine(34) in tRNA + A + H2O. In terms of biological role, catalyzes oxygen-dependent 5-hydroxyuridine (ho5U) modification at position 34 in tRNAs. The polypeptide is tRNA uridine(34) hydroxylase (Methylobacillus flagellatus (strain ATCC 51484 / DSM 6875 / VKM B-1610 / KT)).